The primary structure comprises 678 residues: Vacuolar fusion protein mon1 (678 aa).

Disordered regions lie at residues 1–116, 449–474, and 568–591; these read MDRD…YTSP, EENN…VTSP, and FETS…KTTE. The segment covering 10-20 has biased composition (low complexity); sequence NDGTNDNNDTT. Positions 63 to 77 are enriched in polar residues; that stretch reads RPTTQVSTIDISTLS. Residues 87–105 are compositionally biased toward low complexity; it reads STSATSATSATSATRSVAS. Residues 106–116 are compositionally biased toward polar residues; the sequence is PQSSASGYTSP. Positions 450-459 are enriched in low complexity; it reads ENNSNNTNNP. The segment covering 460–471 has biased composition (pro residues); sequence EQPPQPPPPKPV.

The protein belongs to the MON1/SAND family.

It is found in the endosome. Its subcellular location is the multivesicular body membrane. The protein resides in the prevacuolar compartment membrane. It localises to the vacuole membrane. In terms of biological role, in complex with CCZ1, is required for multiple vacuole delivery pathways including the cytoplasm to vacuole transport (Cvt), autophagy, pexophagy and endocytosis. The MON1-CCZ1 complex acts at the fusion of vesicles with the vacuole, through its regulation of the SNARE complex during the coordinated priming and docking stages of fusion, and particularly at the stage of tethering/docking. The polypeptide is Vacuolar fusion protein mon1 (apg-13) (Neurospora crassa (strain ATCC 24698 / 74-OR23-1A / CBS 708.71 / DSM 1257 / FGSC 987)).